Reading from the N-terminus, the 383-residue chain is L-lactate dehydrogenase (383 aa).

Residues 1 to 380 (MIISSGNDYR…NADCLVQAIK (380 aa)) enclose the FMN hydroxy acid dehydrogenase domain. Tyr24 is a substrate binding site. Residues Ser106 and Gln127 each contribute to the FMN site. A substrate-binding site is contributed by Tyr129. Thr155 is an FMN binding site. Residue Arg164 coordinates substrate. FMN is bound at residue Lys251. His275 acts as the Proton acceptor in catalysis. Residue Arg278 participates in substrate binding. 306–330 (DSGIRNGLDVVRMLALGADTVLLGR) is a binding site for FMN.

Belongs to the FMN-dependent alpha-hydroxy acid dehydrogenase family. It depends on FMN as a cofactor.

It localises to the cell inner membrane. It catalyses the reaction (S)-lactate + A = pyruvate + AH2. In terms of biological role, catalyzes the conversion of L-lactate to pyruvate. Is coupled to the respiratory chain. The protein is L-lactate dehydrogenase of Acinetobacter baumannii (strain AB307-0294).